The chain runs to 655 residues: p-hydroxybenzoic acid efflux pump subunit AaeB (655 aa).

The next 11 helical transmembrane spans lie at 13–33 (FAVKLACAIVLALFIGFHFQL), 38–58 (WAVLTAAIVAAGPAFAAGGEP), 69–89 (LRIIGTFIGCIAALIIIISMI), 93–113 (LLMILVCCVWAGFCTWISSLV), 121–141 (WGLSGYTALIIVITIQTEPLL), 152–172 (EIVIGIGCAILADLLFSPRSI), 370–390 (LFWLWTGWTSGNGAMVMIAVV), 407–427 (FIYGTLAALPLGLLYFLVIIP), 431–451 (QSMLLLCLSLAVLGFFIGIEV), 459–479 (MGALASTINIIVLDNPMTFHF), and 482–502 (FLDSALGQIVGCMLAFIVILL).

This sequence belongs to the aromatic acid exporter ArAE (TC 2.A.85) family.

It is found in the cell inner membrane. In terms of biological role, forms an efflux pump with AaeA. Could function as a metabolic relief valve, allowing to eliminate certain compounds when they accumulate to high levels in the cell. The chain is p-hydroxybenzoic acid efflux pump subunit AaeB from Salmonella enteritidis PT4 (strain P125109).